A 377-amino-acid polypeptide reads, in one-letter code: Presenilin-associated rhomboid-like protein, mitochondrial (377 aa).

A mitochondrion-targeting transit peptide spans 1–50 (MALQGWVQRGWRCGPAWAPPLGGGYRELSATQAPRLLGRRFNLFVQQKCG). At 51-99 (FRKAPRKVEPRRSDTGSSGEAYKRSALIPPLEETVFYPSPYPIRTLVKP) the chain is on the mitochondrial matrix side. Phosphoserine is present on residues Ser63 and Ser68. The helical transmembrane segment at 100–119 (FFFTIGFTGCAFGSAAIWQY) threads the bilayer. At 120 to 165 (ESLKSRVQSYFDGIKADWLDSIRPQKEGNLRKEINKWWNSLSDGQR) the chain is on the mitochondrial intermembrane side. The chain crosses the membrane as a helical span at residues 166–185 (TVTGIIAANALVFCLWRVPS). At 186–205 (LQRTMIRYFTSNPASKVLCS) the chain is on the mitochondrial matrix side. A helical transmembrane segment spans residues 206 to 228 (PMLLSTFSHFSLFHMAANMYVLW). The Mitochondrial intermembrane segment spans residues 229-242 (SFSSSIVNILGQEQ). Residues 243 to 260 (FVAVYLSAGVISNFVSYV) traverse the membrane as a helical segment. Over 261-270 (CKVATGRYGP) the chain is Mitochondrial matrix. The chain crosses the membrane as a helical span at residues 271–287 (SLGASGAIMTVLAAVCT). Catalysis depends on Ser275, which acts as the Nucleophile. Topologically, residues 288-293 (KIPEGR) are mitochondrial intermembrane. Residues 294–316 (LAIIFLPVFTFTAGNALKAIIAM) form a helical membrane-spanning segment. The Mitochondrial matrix segment spans residues 317 to 330 (DTAGMILGWKFFDH). Residues 331–352 (AAHLGGALFGIWYITYGHELIW) form a helical membrane-spanning segment. Residue His333 is part of the active site. Residues 353-377 (KNREPLVKIWHEIRTNGPKKGGGSK) are Mitochondrial intermembrane-facing.

The protein belongs to the peptidase S54 family. As to quaternary structure, interacts with PSEN1 and PSEN2. Binds OPA1. P-beta is proteolytically processed (beta-cleavage) in a PARL-dependent manner.

It localises to the mitochondrion inner membrane. Its subcellular location is the nucleus. The enzyme catalyses Cleaves type-1 transmembrane domains using a catalytic dyad composed of serine and histidine that are contributed by different transmembrane domains.. Its function is as follows. Required for the control of apoptosis during postnatal growth. Essential for proteolytic processing of an antiapoptotic form of OPA1 which prevents the release of mitochondrial cytochrome c in response to intrinsic apoptotic signals. Required for the maturation of PINK1 into its 52kDa mature form after its cleavage by mitochondrial-processing peptidase (MPP). Promotes cleavage of serine/threonine-protein phosphatase PGAM5 in damaged mitochondria in response to loss of mitochondrial membrane potential. Mediates differential cleavage of PINK1 and PGAM5 depending on the health status of mitochondria, disassociating from PINK1 and associating with PGAM5 in response to mitochondrial membrane potential loss. Required for processing of CLPB into a form with higher protein disaggregase activity by removing an autoinhibitory N-terminal peptide. Promotes processing of DIABLO/SMAC in the mitochondrion which is required for DIABLO apoptotic activity. Also required for cleavage of STARD7 and TTC19. Promotes changes in mitochondria morphology regulated by phosphorylation of P-beta domain. This chain is Presenilin-associated rhomboid-like protein, mitochondrial (Parl), found in Mus musculus (Mouse).